The sequence spans 453 residues: Anthocyanidin 3-O-glucosyltransferase (453 aa).

The Proton acceptor role is filled by His17. Residue His17 coordinates an anthocyanidin. Asp117 functions as the Charge relay in the catalytic mechanism. Thr139 serves as a coordination point for UDP-alpha-D-glucose. His148 lines the an anthocyanidin pocket. Ala331, Gln333, His348, Trp351, Asn352, Ser353, and Glu356 together coordinate UDP-alpha-D-glucose. Position 371 (Gly371) interacts with an anthocyanidin. Asp372 and Gln373 together coordinate UDP-alpha-D-glucose.

The protein belongs to the UDP-glycosyltransferase family.

The enzyme catalyses an anthocyanidin + UDP-alpha-D-glucose + H(+) = an anthocyanidin 3-O-beta-D-glucoside + UDP. It catalyses the reaction delphinidin + UDP-alpha-D-glucose = delphinidin 3-O-beta-D-glucoside + UDP. It carries out the reaction pelargonidin + UDP-alpha-D-glucose = pelargonidin 3-O-beta-D-glucoside + UDP. The catalysed reaction is cyanidin + UDP-alpha-D-glucose = cyanidin 3-O-beta-D-glucoside + UDP + H(+). The protein operates within pigment biosynthesis; anthocyanin biosynthesis. Functionally, in the presence of other necessary color factors, this glycosylation reaction allows the accumulation of anthocyanin pigments. Anthocyanidins are the preferred substrates, while flavonols are only a minor substrate in vitro. The polypeptide is Anthocyanidin 3-O-glucosyltransferase (Gentiana triflora (Clustered gentian)).